Consider the following 220-residue polypeptide: Peptide methionine sulfoxide reductase MsrA (220 aa).

Residue Cys52 is part of the active site.

The protein belongs to the MsrA Met sulfoxide reductase family.

It carries out the reaction L-methionyl-[protein] + [thioredoxin]-disulfide + H2O = L-methionyl-(S)-S-oxide-[protein] + [thioredoxin]-dithiol. The enzyme catalyses [thioredoxin]-disulfide + L-methionine + H2O = L-methionine (S)-S-oxide + [thioredoxin]-dithiol. Has an important function as a repair enzyme for proteins that have been inactivated by oxidation. Catalyzes the reversible oxidation-reduction of methionine sulfoxide in proteins to methionine. In Corynebacterium diphtheriae (strain ATCC 700971 / NCTC 13129 / Biotype gravis), this protein is Peptide methionine sulfoxide reductase MsrA.